A 333-amino-acid chain; its full sequence is Complement C1q and tumor necrosis factor-related protein 9B (333 aa).

The signal sequence occupies residues 1 to 19; sequence MRIWWLLLAIEICTGNINS. 3 Collagen-like domains span residues 24-82, 95-154, and 155-191; these read RQGH…DGKV, GSPG…PGPM, and GPIG…GEKG. The segment at 24–189 is disordered; sequence RQGHPGIPGN…IRGWKGDRGE (166 aa). A compositionally biased stretch (low complexity) spans 26-40; the sequence is GHPGIPGNPGHNGLP. Basic and acidic residues-rich tracts occupy residues 42–55 and 69–88; these read RDGR…KGDA and TSGE…KGIK. A C1q domain is found at 197-333; that stretch reads LVLPKSAFTV…FTGFLLFSSQ (137 aa).

As to quaternary structure, interacts with CTRP9A and ADIPOQ. Forms heterotrimers and heterooligomeric complexes with CTRP9A. In terms of tissue distribution, expressed at low levels. Not expressed in adipose tissues.

Its subcellular location is the secreted. Its function is as follows. Probable adipokine. Activates AMPK, AKT, and p44/42 MAPK signaling pathways. The chain is Complement C1q and tumor necrosis factor-related protein 9B (C1QTNF9B) from Homo sapiens (Human).